The sequence spans 77 residues: Acyl carrier protein (77 aa).

The Carrier domain maps to Met-1–Glu-76. Ser-36 is modified (O-(pantetheine 4'-phosphoryl)serine).

It belongs to the acyl carrier protein (ACP) family. In terms of processing, 4'-phosphopantetheine is transferred from CoA to a specific serine of apo-ACP by AcpS. This modification is essential for activity because fatty acids are bound in thioester linkage to the sulfhydryl of the prosthetic group.

It is found in the cytoplasm. The protein operates within lipid metabolism; fatty acid biosynthesis. In terms of biological role, carrier of the growing fatty acid chain in fatty acid biosynthesis. The protein is Acyl carrier protein of Staphylococcus carnosus (strain TM300).